Reading from the N-terminus, the 764-residue chain is Reticulon-1 (764 aa).

4 disordered regions span residues 1–37, 115–147, 247–400, and 455–475; these read MAAN…GGAL, PDIK…SGIE, LYNS…SEIE, and ESCD…DSPM. Residues 261-282 are compositionally biased toward polar residues; sequence VTISFTGMETTLQTEYPENQQG. Residues 328-337 show a composition bias toward basic and acidic residues; the sequence is EEQRKYKISE. Residues 578–764 form the Reticulon domain; it reads AIELLYWRDI…AKIPGTKQKE (187 aa). The next 2 membrane-spanning stretches (helical) occupy residues 607 to 627 and 696 to 716; these read FSVV…TISF and VLMW…LLIM.

The protein resides in the endoplasmic reticulum membrane. It is found in the nucleus. In terms of biological role, inhibits amyloid precursor protein processing, probably by blocking BACE1 activity. The sequence is that of Reticulon-1 from Xenopus tropicalis (Western clawed frog).